We begin with the raw amino-acid sequence, 239 residues long: Probable transcriptional regulatory protein Veis_4238 (239 aa).

Positions 1–22 (MAGHSKWANIQHRKGRQDEKRG) are disordered.

Belongs to the TACO1 family.

The protein resides in the cytoplasm. The chain is Probable transcriptional regulatory protein Veis_4238 from Verminephrobacter eiseniae (strain EF01-2).